A 388-amino-acid chain; its full sequence is Succinate--CoA ligase [ADP-forming] subunit beta (388 aa).

The 237-residue stretch at 9-245 (KELLAKYGLP…KSQENERELK (237 aa)) folds into the ATP-grasp domain. ATP contacts are provided by residues Lys46, 53–55 (GRG), Glu100, Tyr103, and Glu108. Asn200 and Asp214 together coordinate Mg(2+). Substrate is bound by residues Asn265 and 322 to 324 (GIV).

It belongs to the succinate/malate CoA ligase beta subunit family. In terms of assembly, heterotetramer of two alpha and two beta subunits. The cofactor is Mg(2+).

It carries out the reaction succinate + ATP + CoA = succinyl-CoA + ADP + phosphate. The enzyme catalyses GTP + succinate + CoA = succinyl-CoA + GDP + phosphate. The protein operates within carbohydrate metabolism; tricarboxylic acid cycle; succinate from succinyl-CoA (ligase route): step 1/1. Functionally, succinyl-CoA synthetase functions in the citric acid cycle (TCA), coupling the hydrolysis of succinyl-CoA to the synthesis of either ATP or GTP and thus represents the only step of substrate-level phosphorylation in the TCA. The beta subunit provides nucleotide specificity of the enzyme and binds the substrate succinate, while the binding sites for coenzyme A and phosphate are found in the alpha subunit. In Laribacter hongkongensis (strain HLHK9), this protein is Succinate--CoA ligase [ADP-forming] subunit beta.